Here is a 106-residue protein sequence, read N- to C-terminus: Large ribosomal subunit protein uL24 (106 aa).

The protein belongs to the universal ribosomal protein uL24 family. In terms of assembly, part of the 50S ribosomal subunit.

Functionally, one of two assembly initiator proteins, it binds directly to the 5'-end of the 23S rRNA, where it nucleates assembly of the 50S subunit. Its function is as follows. One of the proteins that surrounds the polypeptide exit tunnel on the outside of the subunit. In Spiroplasma kunkelii, this protein is Large ribosomal subunit protein uL24.